The sequence spans 356 residues: UDP-N-acetylglucosamine--N-acetylmuramyl-(pentapeptide) pyrophosphoryl-undecaprenol N-acetylglucosamine transferase (356 aa).

UDP-N-acetyl-alpha-D-glucosamine is bound by residues Arg166, Ser196, and Gln290.

The protein belongs to the glycosyltransferase 28 family. MurG subfamily.

The protein resides in the cell membrane. It catalyses the reaction Mur2Ac(oyl-L-Ala-gamma-D-Glu-L-Lys-D-Ala-D-Ala)-di-trans,octa-cis-undecaprenyl diphosphate + UDP-N-acetyl-alpha-D-glucosamine = beta-D-GlcNAc-(1-&gt;4)-Mur2Ac(oyl-L-Ala-gamma-D-Glu-L-Lys-D-Ala-D-Ala)-di-trans,octa-cis-undecaprenyl diphosphate + UDP + H(+). It functions in the pathway cell wall biogenesis; peptidoglycan biosynthesis. Cell wall formation. Catalyzes the transfer of a GlcNAc subunit on undecaprenyl-pyrophosphoryl-MurNAc-pentapeptide (lipid intermediate I) to form undecaprenyl-pyrophosphoryl-MurNAc-(pentapeptide)GlcNAc (lipid intermediate II). The chain is UDP-N-acetylglucosamine--N-acetylmuramyl-(pentapeptide) pyrophosphoryl-undecaprenol N-acetylglucosamine transferase from Staphylococcus aureus (strain USA300).